A 511-amino-acid chain; its full sequence is Ribonuclease Y (511 aa).

A helical membrane pass occupies residues 3-23 (VTIVASIACFIVGGILSYVLF). The KH domain occupies 201-261 (SVTVFHIESD…VRREIARLAL (61 aa)). Positions 327 to 420 (LLQHARETAN…VQVCDAISGA (94 aa)) constitute an HD domain.

Belongs to the RNase Y family.

The protein resides in the cell membrane. Endoribonuclease that initiates mRNA decay. The sequence is that of Ribonuclease Y from Bacteroides fragilis (strain ATCC 25285 / DSM 2151 / CCUG 4856 / JCM 11019 / LMG 10263 / NCTC 9343 / Onslow / VPI 2553 / EN-2).